The chain runs to 212 residues: Ribosomal RNA small subunit methyltransferase G (212 aa).

S-adenosyl-L-methionine is bound by residues Gly80, Leu85, 131–132 (AE), and Arg146.

Belongs to the methyltransferase superfamily. RNA methyltransferase RsmG family.

It is found in the cytoplasm. The enzyme catalyses guanosine(527) in 16S rRNA + S-adenosyl-L-methionine = N(7)-methylguanosine(527) in 16S rRNA + S-adenosyl-L-homocysteine. Specifically methylates the N7 position of guanine in position 527 of 16S rRNA. This Xanthomonas oryzae pv. oryzae (strain KACC10331 / KXO85) protein is Ribosomal RNA small subunit methyltransferase G.